The primary structure comprises 362 residues: 4-hydroxy-3-methylbut-2-en-1-yl diphosphate synthase (flavodoxin) (362 aa).

[4Fe-4S] cluster is bound by residues C266, C269, C301, and E308.

The protein belongs to the IspG family. [4Fe-4S] cluster is required as a cofactor.

The enzyme catalyses (2E)-4-hydroxy-3-methylbut-2-enyl diphosphate + oxidized [flavodoxin] + H2O + 2 H(+) = 2-C-methyl-D-erythritol 2,4-cyclic diphosphate + reduced [flavodoxin]. Its pathway is isoprenoid biosynthesis; isopentenyl diphosphate biosynthesis via DXP pathway; isopentenyl diphosphate from 1-deoxy-D-xylulose 5-phosphate: step 5/6. Converts 2C-methyl-D-erythritol 2,4-cyclodiphosphate (ME-2,4cPP) into 1-hydroxy-2-methyl-2-(E)-butenyl 4-diphosphate. This chain is 4-hydroxy-3-methylbut-2-en-1-yl diphosphate synthase (flavodoxin), found in Malacoplasma penetrans (strain HF-2) (Mycoplasma penetrans).